The sequence spans 69 residues: U2-agatoxin-Ao1w (69 aa).

The N-terminal stretch at 1 to 20 is a signal peptide; that stretch reads MRAIISLLLISAMVFSMIEA. Positions 21–34 are excised as a propeptide; the sequence is VPVEEGLQLFEGER. Intrachain disulfides connect cysteine 37–cysteine 53, cysteine 44–cysteine 58, and cysteine 52–cysteine 68.

This sequence belongs to the neurotoxin 01 (U2-agtx) family. As to expression, expressed by the venom gland.

The protein resides in the secreted. Functionally, insect active toxin causing rapid but reversible paralysis in crickets. No activity shown in mammals. Does not show effect on mammalian voltage-gated calcium channels. The sequence is that of U2-agatoxin-Ao1w from Agelena orientalis (Funnel-web spider).